The primary structure comprises 283 residues: Putative ABC transporter ATP-binding protein MA_4342 (283 aa).

The ABC transporter domain occupies 3 to 238 (IILENVSFFY…KNVPLPPVTS (236 aa)). Position 40–47 (40–47 (GEKGAGKS)) interacts with ATP.

The protein belongs to the ABC transporter superfamily.

The protein resides in the cell membrane. Its function is as follows. Probably part of an ABC transporter complex. Responsible for energy coupling to the transport system. The polypeptide is Putative ABC transporter ATP-binding protein MA_4342 (Methanosarcina acetivorans (strain ATCC 35395 / DSM 2834 / JCM 12185 / C2A)).